The following is a 257-amino-acid chain: MEVARGENIRKRKFFDMDIPLNKGIKPISYKNIGINTLPKNNMSRKILFKDKISRDSISKDSLAKDNLSKSSMLKDDLTRDNSPKNGLIGKKRSAPLDISFQNMNSSMPSSTQKRTKILDEEIEDQSTSNENSPVIVDLTLKPSYMPKISRITEIIHKMKELNMNRIEDALPSNKKRNEYDDAKNILLQTMEMDEEDYEAENVVIEDSPYLNASLSEDDTDSSIVEVETDYSEEEKESMSESESSSDDESYSLYDSF.

Over residues 74–83 (LKDDLTRDNS) the composition is skewed to basic and acidic residues. Disordered stretches follow at residues 74-115 (LKDD…TQKR) and 209-257 (PYLN…YDSF). Polar residues predominate over residues 100-113 (SFQNMNSSMPSSTQ). The span at 216–236 (SEDDTDSSIVEVETDYSEEEK) shows a compositional bias: acidic residues.

This sequence belongs to the asfivirus DP238L family.

This is an uncharacterized protein from Ornithodoros (relapsing fever ticks).